Reading from the N-terminus, the 93-residue chain is Alpha-defensin 2 (93 aa).

The first 19 residues, 1 to 19 (MKPLVLLSALVLLSFQVQA), serve as a signal peptide directing secretion. Residues 20–58 (DPIQNTDEETKTEEQSGEEDQAVSVSFGDREGASLQEES) constitute a propeptide that is removed on maturation. Residues 23–49 (QNTDEETKTEEQSGEEDQAVSVSFGDR) form a disordered region. 3 disulfides stabilise this stretch: cysteine 64–cysteine 92, cysteine 66–cysteine 81, and cysteine 71–cysteine 91.

This sequence belongs to the alpha-defensin family. Paneth cells of the small bowel.

It is found in the secreted. In terms of biological role, has broad-spectrum antimicrobial properties. Has antibacterial activity against the Gram-positive bacterium L.monocytogenes EGD and the Gram-negative bacteria E.coli ML-35p and avirulent S.typhimurium 7953, but not against the mouse-virulent S.typhimurium 14028S. Probably contributes to the antimicrobial barrier function of the small bowel mucosa. This is Alpha-defensin 2 (Defa2) from Mus musculus (Mouse).